A 281-amino-acid polypeptide reads, in one-letter code: Nucleotide-binding protein Noc_2797 (281 aa).

8 to 15 (GVSGSGKS) is a binding site for ATP. Residue 58-61 (DARN) coordinates GTP.

Belongs to the RapZ-like family.

Displays ATPase and GTPase activities. This chain is Nucleotide-binding protein Noc_2797, found in Nitrosococcus oceani (strain ATCC 19707 / BCRC 17464 / JCM 30415 / NCIMB 11848 / C-107).